Reading from the N-terminus, the 182-residue chain is Epoxyqueuosine reductase QueH (182 aa).

[4Fe-4S] cluster contacts are provided by cysteine 10, cysteine 11, cysteine 85, and cysteine 88. A disulfide bridge connects residues cysteine 165 and cysteine 167.

It belongs to the QueH family.

It carries out the reaction epoxyqueuosine(34) in tRNA + AH2 = queuosine(34) in tRNA + A + H2O. It functions in the pathway tRNA modification; tRNA-queuosine biosynthesis. Catalyzes the conversion of epoxyqueuosine (oQ) to queuosine (Q), which is a hypermodified base found in the wobble positions of tRNA(Asp), tRNA(Asn), tRNA(His) and tRNA(Tyr). This Dehalococcoides mccartyi (strain ATCC BAA-2266 / KCTC 15142 / 195) (Dehalococcoides ethenogenes (strain 195)) protein is Epoxyqueuosine reductase QueH.